The sequence spans 43 residues: Cytochrome b559 subunit beta (43 aa).

A helical membrane pass occupies residues 18 to 34 (WLAIHGLAIPTVFFLGG). A heme-binding site is contributed by His-22.

The protein belongs to the PsbE/PsbF family. Heterodimer of an alpha subunit and a beta subunit. PSII is composed of 1 copy each of membrane proteins PsbA, PsbB, PsbC, PsbD, PsbE, PsbF, PsbH, PsbI, PsbJ, PsbK, PsbL, PsbM, PsbT, PsbX, PsbY, PsbZ, Psb30/Ycf12, at least 3 peripheral proteins of the oxygen-evolving complex and a large number of cofactors. It forms dimeric complexes. Requires heme b as cofactor.

Its subcellular location is the plastid. It is found in the chloroplast thylakoid membrane. Its function is as follows. This b-type cytochrome is tightly associated with the reaction center of photosystem II (PSII). PSII is a light-driven water:plastoquinone oxidoreductase that uses light energy to abstract electrons from H(2)O, generating O(2) and a proton gradient subsequently used for ATP formation. It consists of a core antenna complex that captures photons, and an electron transfer chain that converts photonic excitation into a charge separation. The sequence is that of Cytochrome b559 subunit beta from Phaeodactylum tricornutum (strain CCAP 1055/1).